The sequence spans 678 residues: Transcriptional regulator CRZ1 (678 aa).

Positions 1 to 21 are enriched in polar residues; the sequence is MSFSNGNMASYMTSSNGEEQS. Disordered regions lie at residues 1–50 and 159–195; these read MSFS…SHTF and TPADNQHRPSLTNQFLSPRSNYDGTTRSSGIDSNYSD. The span at 34–47 shows a compositional bias: low complexity; the sequence is YRRNNFRNSSNSGS. The segment covering 166–195 has biased composition (polar residues); the sequence is RPSLTNQFLSPRSNYDGTTRSSGIDSNYSD. Residue Thr170 is modified to Phosphothreonine. A phosphoserine mark is found at Ser175, Ser245, and Ser385. The segment at 401–486 is disordered; that stretch reads KLKKSRRRSS…SNFNEDNNNN (86 aa). The segment covering 410–428 has biased composition (low complexity); the sequence is SQTSNNSFTSRRSSRSRSI. Basic and acidic residues-rich tracts occupy residues 429 to 446 and 457 to 467; these read SPDEKAKSISANREKLLE and DNNRERYDNDS. Over residues 472–486 the composition is skewed to low complexity; it reads NTINSSNFNEDNNNN. C2H2-type zinc fingers lie at residues 569–591 and 597–619; these read FACDVCGKKFTRPYNLKSHLRTH and FICSICGKAFARQHDRKRHEDLH.

Phosphorylated. Dephosphorylated by calcineurin which leads to rapid translocation from the cytoplasm to the nucleus. Phosphorylated by the cyclin-CDK PHO80-PHO85.

The protein localises to the nucleus. It is found in the cytoplasm. In terms of biological role, involved in the regulation of calcium ion homeostasis. Binds to the calcineurin-dependent response element. Transcriptionally regulates PMC1, PMR1, PMR2A and FKS2. This Saccharomyces cerevisiae (strain ATCC 204508 / S288c) (Baker's yeast) protein is Transcriptional regulator CRZ1 (CRZ1).